The following is a 40-amino-acid chain: MADTTGRIPLWVIGTVAGIPVIGLIGIFFYGSYSGLGSSL.

The helical transmembrane segment at 8 to 28 threads the bilayer; the sequence is IPLWVIGTVAGIPVIGLIGIF.

Belongs to the PsbJ family. In terms of assembly, PSII is composed of 1 copy each of membrane proteins PsbA, PsbB, PsbC, PsbD, PsbE, PsbF, PsbH, PsbI, PsbJ, PsbK, PsbL, PsbM, PsbT, PsbX, PsbY, PsbZ, Psb30/Ycf12, at least 3 peripheral proteins of the oxygen-evolving complex and a large number of cofactors. It forms dimeric complexes.

It is found in the plastid. It localises to the chloroplast thylakoid membrane. Its function is as follows. One of the components of the core complex of photosystem II (PSII). PSII is a light-driven water:plastoquinone oxidoreductase that uses light energy to abstract electrons from H(2)O, generating O(2) and a proton gradient subsequently used for ATP formation. It consists of a core antenna complex that captures photons, and an electron transfer chain that converts photonic excitation into a charge separation. This chain is Photosystem II reaction center protein J, found in Nasturtium officinale (Watercress).